A 642-amino-acid chain; its full sequence is Sec1 family domain-containing protein 1 (642 aa).

A2 is subject to N-acetylalanine. 3 positions are modified to phosphoserine: S37, S303, and S528.

It belongs to the STXBP/unc-18/SEC1 family. In terms of assembly, interacts with STX17. Interacts with STX5A. Interacts with the COG complex via COG4.

The protein resides in the cytoplasm. It is found in the endoplasmic reticulum membrane. It localises to the golgi apparatus. The protein localises to the golgi stack membrane. Functionally, plays a role in SNARE-pin assembly and Golgi-to-ER retrograde transport via its interaction with COG4. Involved in vesicular transport between the endoplasmic reticulum and the Golgi. The sequence is that of Sec1 family domain-containing protein 1 (SCFD1) from Homo sapiens (Human).